The following is a 76-amino-acid chain: DNA-directed RNA polymerase subunit epsilon (76 aa).

This sequence belongs to the RNA polymerase subunit epsilon family. In terms of assembly, RNAP is composed of a core of 2 alpha, a beta and a beta' subunit. The core is associated with a delta subunit, and at least one of epsilon or omega. When a sigma factor is associated with the core the holoenzyme is formed, which can initiate transcription.

It carries out the reaction RNA(n) + a ribonucleoside 5'-triphosphate = RNA(n+1) + diphosphate. Its function is as follows. A non-essential component of RNA polymerase (RNAP). The sequence is that of DNA-directed RNA polymerase subunit epsilon from Streptococcus equi subsp. equi (strain 4047).